We begin with the raw amino-acid sequence, 197 residues long: MNIIGLTGGIASGKSTVSRILERLGAVVIDADQLAREAVMPGTSAHRSIVAAFGEGILLPDGAIDRKALGSIIFADSSARKRLEAITHPAIRDLAELRLAELRRSGVPVAVYMAALLIEAGATDRVDEVWVVYVDRETQVRRVMARDGLSRSEAEQRLAAQMPMEEKAARGQVVIDNNGTPEELERRIEEIWAKRFP.

A DPCK domain is found at 3 to 197; the sequence is IIGLTGGIAS…IEEIWAKRFP (195 aa). 11 to 16 contributes to the ATP binding site; sequence ASGKST.

This sequence belongs to the CoaE family.

Its subcellular location is the cytoplasm. It catalyses the reaction 3'-dephospho-CoA + ATP = ADP + CoA + H(+). Its pathway is cofactor biosynthesis; coenzyme A biosynthesis; CoA from (R)-pantothenate: step 5/5. Functionally, catalyzes the phosphorylation of the 3'-hydroxyl group of dephosphocoenzyme A to form coenzyme A. The chain is Dephospho-CoA kinase from Geobacter sulfurreducens (strain ATCC 51573 / DSM 12127 / PCA).